The chain runs to 514 residues: 2,3-bisphosphoglycerate-independent phosphoglycerate mutase (514 aa).

2 residues coordinate Mn(2+): D14 and S64. The active-site Phosphoserine intermediate is S64. Residues H125, 155-156 (RD), R187, R193, 263-266 (RADR), and K336 each bind substrate. Residues D403, H407, D444, H445, and H463 each contribute to the Mn(2+) site.

Belongs to the BPG-independent phosphoglycerate mutase family. Monomer. It depends on Mn(2+) as a cofactor.

It carries out the reaction (2R)-2-phosphoglycerate = (2R)-3-phosphoglycerate. The protein operates within carbohydrate degradation; glycolysis; pyruvate from D-glyceraldehyde 3-phosphate: step 3/5. Catalyzes the interconversion of 2-phosphoglycerate and 3-phosphoglycerate. The chain is 2,3-bisphosphoglycerate-independent phosphoglycerate mutase from Shewanella denitrificans (strain OS217 / ATCC BAA-1090 / DSM 15013).